The chain runs to 668 residues: Spindle assembly abnormal protein 6 homolog (668 aa).

Positions 39–91 (VHKKELVVRLSDDTDPFFLYNLTLGEEDFQSLKNQQGLLVEFSAFPQRFIDLL) constitute a PISA domain. Positions 182–482 (LGVTQQALAE…NVIAWLNKQL (301 aa)) form a coiled coil. The disordered stretch occupies residues 623-668 (GSVPVKGQRNGSSAGTVPVRPALPKSGSSPILSAYFPGQQSRLPAS).

Nine homodimers form a cartwheel structure with an internal diameter of 23 nM and radial spokes connecting to the microtubule triplets.

Its subcellular location is the cytoplasm. The protein localises to the cytoskeleton. It is found in the microtubule organizing center. The protein resides in the centrosome. Central scaffolding component of the centrioles ensuring their 9-fold symmetry. Required for centrosome biogenesis and duplication: required both for mother-centriole-dependent centriole duplication and deuterosome-dependent centriole amplification in multiciliated cells. In Xenopus laevis (African clawed frog), this protein is Spindle assembly abnormal protein 6 homolog (sas6).